We begin with the raw amino-acid sequence, 147 residues long: Deoxyuridine 5'-triphosphate nucleotidohydrolase (147 aa).

Arg24 is a Mg(2+) binding site. DUTP contacts are provided by residues 68-70, 82-85, Tyr88, Gly93, Ile95, and Arg111; these read PRS and GVID.

Belongs to the dUTPase family.

It carries out the reaction dUTP + H2O = dUMP + diphosphate + H(+). Functionally, this enzyme is involved in nucleotide metabolism: it produces dUMP, the immediate precursor of thymidine nucleotides and it decreases the intracellular concentration of dUTP so that uracil cannot be incorporated into DNA. This Homo sapiens (Human) protein is Deoxyuridine 5'-triphosphate nucleotidohydrolase (OPG046).